We begin with the raw amino-acid sequence, 528 residues long: Probable rhamnogalacturonate lyase A (528 aa).

The N-terminal stretch at 1-20 (MLSRTILFSTSFLWVRVANA) is a signal peptide. 2 disulfides stabilise this stretch: Cys50–Cys93 and Cys184–Cys193.

This sequence belongs to the polysaccharide lyase 4 family.

Its subcellular location is the secreted. The enzyme catalyses Endotype eliminative cleavage of L-alpha-rhamnopyranosyl-(1-&gt;4)-alpha-D-galactopyranosyluronic acid bonds of rhamnogalacturonan I domains in ramified hairy regions of pectin leaving L-rhamnopyranose at the reducing end and 4-deoxy-4,5-unsaturated D-galactopyranosyluronic acid at the non-reducing end.. Pectinolytic enzymes consist of four classes of enzymes: pectin lyase, polygalacturonase, pectin methylesterase and rhamnogalacturonase. Degrades the rhamnogalacturonan I (RG-I) backbone of pectin. The protein is Probable rhamnogalacturonate lyase A (rglA) of Aspergillus flavus (strain ATCC 200026 / FGSC A1120 / IAM 13836 / NRRL 3357 / JCM 12722 / SRRC 167).